Here is a 361-residue protein sequence, read N- to C-terminus: Holliday junction branch migration complex subunit RuvB (361 aa).

A disordered region spans residues 1–21 (MHKDEDQRLLGAVPLPNDPDR). The segment at 1-184 (MHKDEDQRLL…FGIPIRLNFY (184 aa)) is large ATPase domain (RuvB-L). Residues leucine 23, arginine 24, glycine 65, lysine 68, threonine 69, threonine 70, 131–133 (EDY), arginine 174, tyrosine 184, and arginine 221 contribute to the ATP site. Position 69 (threonine 69) interacts with Mg(2+). Residues 185-255 (TIEELEYIVQ…IADEALSRLE (71 aa)) are small ATPAse domain (RuvB-S). The interval 258–361 (HLGLDPLDRR…QTVLWDEADD (104 aa)) is head domain (RuvB-H). DNA is bound by residues arginine 294, arginine 313, and arginine 318.

The protein belongs to the RuvB family. In terms of assembly, homohexamer. Forms an RuvA(8)-RuvB(12)-Holliday junction (HJ) complex. HJ DNA is sandwiched between 2 RuvA tetramers; dsDNA enters through RuvA and exits via RuvB. An RuvB hexamer assembles on each DNA strand where it exits the tetramer. Each RuvB hexamer is contacted by two RuvA subunits (via domain III) on 2 adjacent RuvB subunits; this complex drives branch migration. In the full resolvosome a probable DNA-RuvA(4)-RuvB(12)-RuvC(2) complex forms which resolves the HJ.

The protein resides in the cytoplasm. It carries out the reaction ATP + H2O = ADP + phosphate + H(+). The RuvA-RuvB-RuvC complex processes Holliday junction (HJ) DNA during genetic recombination and DNA repair, while the RuvA-RuvB complex plays an important role in the rescue of blocked DNA replication forks via replication fork reversal (RFR). RuvA specifically binds to HJ cruciform DNA, conferring on it an open structure. The RuvB hexamer acts as an ATP-dependent pump, pulling dsDNA into and through the RuvAB complex. RuvB forms 2 homohexamers on either side of HJ DNA bound by 1 or 2 RuvA tetramers; 4 subunits per hexamer contact DNA at a time. Coordinated motions by a converter formed by DNA-disengaged RuvB subunits stimulates ATP hydrolysis and nucleotide exchange. Immobilization of the converter enables RuvB to convert the ATP-contained energy into a lever motion, pulling 2 nucleotides of DNA out of the RuvA tetramer per ATP hydrolyzed, thus driving DNA branch migration. The RuvB motors rotate together with the DNA substrate, which together with the progressing nucleotide cycle form the mechanistic basis for DNA recombination by continuous HJ branch migration. Branch migration allows RuvC to scan DNA until it finds its consensus sequence, where it cleaves and resolves cruciform DNA. The sequence is that of Holliday junction branch migration complex subunit RuvB from Bartonella henselae (strain ATCC 49882 / DSM 28221 / CCUG 30454 / Houston 1) (Rochalimaea henselae).